A 146-amino-acid polypeptide reads, in one-letter code: Villin-like protein ABP41 (146 aa).

The protein belongs to the villin/gelsolin family. In terms of assembly, binds to actin. In terms of tissue distribution, expressed in pollen (at protein level).

The protein resides in the cytoplasm. Its subcellular location is the cytoskeleton. Its function is as follows. Ca(2+)-dependent actin filament-severing protein that is required for pollen tube growth. Probably regulates the dynamics of the actin cytoskeleton. It can promote the assembly of monomers into filaments (nucleation) as well as sever filaments already formed. This is Villin-like protein ABP41 from Lilium davidii (David's lily).